We begin with the raw amino-acid sequence, 1153 residues long: Nitric oxide synthase, inducible (1153 aa).

Residues 23–27 (DINNN) carry the DINNN-motif; mediates interaction with SPSB1, SPSB2 and SPSB4 motif. Zn(2+)-binding residues include cysteine 110 and cysteine 115. Serine 118 serves as a coordination point for (6R)-L-erythro-5,6,7,8-tetrahydrobiopterin. Position 200 (cysteine 200) interacts with heme b. A Phosphoserine; by PKA modification is found at serine 234. L-arginine is bound by residues glutamine 263, tryptophan 372, tyrosine 373, and glutamate 377. 4 residues coordinate (6R)-L-erythro-5,6,7,8-tetrahydrobiopterin: arginine 381, isoleucine 462, tryptophan 463, and phenylalanine 476. Tyrosine 491 lines the heme b pocket. A calmodulin-binding region spans residues 515–535 (LKVLVKAVLFACMLMRKTMAS). The 139-residue stretch at 539–677 (VTILFATETG…AFRSWAVQTF (139 aa)) folds into the Flavodoxin-like domain. The FMN site is built by threonine 545, glutamate 546, threonine 547, lysine 549, and serine 550. Tyrosine 575 carries the phosphotyrosine modification. A Phosphoserine; by PKA modification is found at serine 578. Residues serine 591, threonine 592, serine 628, arginine 633, cysteine 635, glutamate 661, and glutamine 665 each contribute to the FMN site. The FAD-binding FR-type domain occupies 730-970 (KNVFTMRLKS…VRNASGFHLP (241 aa)). Arginine 750 provides a ligand contact to NADP(+). Histidine 772 provides a ligand contact to FAD. Serine 892 carries the phosphoserine; by PKA modification. Residues arginine 906, tyrosine 908, serine 909, threonine 924, and alanine 926 each contribute to the FAD site. Residue threonine 929 coordinates NADP(+). FAD-binding residues include tyrosine 930, valine 943, cysteine 944, and serine 945. Residues threonine 984, arginine 1017, serine 1046, arginine 1047, lysine 1053, tyrosine 1055, glutamine 1057, and aspartate 1090 each coordinate NADP(+).

This sequence belongs to the NOS family. Homodimer. Interacts with NHERF1. Interacts with GAPDH; induced by oxidatively-modified low-densitity lipoprotein (LDL(ox)). Interacts with S100A8 and S100A9 to form the iNOS-S100A8/9 transnitrosylase complex. Interacts with SPSB1, SPSB2 and SPSB4. Interacts with ELOC and CUL5 in the presence of SPSB1 or SPSB2 or SPSB4. Forms a complex with ASL, ASS1 and HSP90AA1; the complex regulates cell-autonomous L-arginine synthesis and citrulline recycling while channeling extracellular L-arginine to nitric oxide synthesis pathway. Heme b is required as a cofactor. Requires FAD as cofactor. It depends on FMN as a cofactor. (6R)-L-erythro-5,6,7,8-tetrahydrobiopterin serves as cofactor. In terms of processing, polyubiquitinated; mediated by SPSB1, SPSB2 and SPSB4, leading to proteasomal degradation. Expressed in the liver, retina, bone cells and airway epithelial cells of the lung. Not expressed in the platelets. Expressed in chondrocytes.

The protein resides in the cytoplasm. Its subcellular location is the cytosol. It catalyses the reaction 2 L-arginine + 3 NADPH + 4 O2 + H(+) = 2 L-citrulline + 2 nitric oxide + 3 NADP(+) + 4 H2O. Regulated by calcium/calmodulin. Aspirin inhibits expression and function of this enzyme and effects may be exerted at the level of translational/post-translational modification and directly on the catalytic activity. Functionally, produces nitric oxide (NO) which is a messenger molecule with diverse functions throughout the body. In macrophages, NO mediates tumoricidal and bactericidal actions. Also has nitrosylase activity and mediates cysteine S-nitrosylation of cytoplasmic target proteins such PTGS2/COX2. As component of the iNOS-S100A8/9 transnitrosylase complex involved in the selective inflammatory stimulus-dependent S-nitrosylation of GAPDH on 'Cys-247' implicated in regulation of the GAIT complex activity and probably multiple targets including ANXA5, EZR, MSN and VIM. Involved in inflammation, enhances the synthesis of pro-inflammatory mediators such as IL6 and IL8. The protein is Nitric oxide synthase, inducible of Homo sapiens (Human).